The following is a 1088-amino-acid chain: RNA-directed RNA polymerase (1088 aa).

Residues 501–687 enclose the RdRp catalytic domain; it reads LSYGDVTRFL…AKRYIAGGKI (187 aa).

It belongs to the reoviridae RNA-directed RNA polymerase family. In terms of assembly, interacts with VP3 (Potential). Interacts with VP2; this interaction activates VP1. Interacts with NSP5; this interaction is probably necessary for the formation of functional virus factories. Interacts with NSP2; this interaction is weak. Mg(2+) serves as cofactor.

The protein resides in the virion. It carries out the reaction RNA(n) + a ribonucleoside 5'-triphosphate = RNA(n+1) + diphosphate. Functionally, RNA-directed RNA polymerase that is involved in both transcription and genome replication. Together with VP3 capping enzyme, forms an enzyme complex positioned near the channels situated at each of the five-fold vertices of the core. Following infection, the outermost layer of the virus is lost, leaving a double-layered particle (DLP) made up of the core and VP6 shell. VP1 then catalyzes the transcription of fully conservative plus-strand genomic RNAs that are extruded through the DLP's channels into the cytoplasm where they function as mRNAs for translation of viral proteins. One copy of each of the viral (+)RNAs is also recruited during core assembly, together with newly synthesized polymerase complexes and VP2. The polymerase of these novo-formed particles catalyzes the synthesis of complementary minus-strands leading to dsRNA formation. To do so, the polymerase specifically recognizes and binds 4 bases 5'-UGUG-3' in the conserved 3'-sequence of plus-strand RNA templates. VP2 presumably activates the autoinhibited VP1-RNA complex to coordinate packaging and genome replication. Once dsRNA synthesis is complete, the polymerase switches to the transcriptional mode, thus providing secondary transcription. The sequence is that of RNA-directed RNA polymerase from Bos taurus (Bovine).